A 166-amino-acid chain; its full sequence is MSAAAGDEIKRVRVDMFTDGACSGNPGPGGWGTILRWGDTEKELWGGETPTTNNRMELMAVIRGLEALRRPVTVTIHTDSRYVHDGITGWIHGWKRNGWKTAAKKPVKNEDLWRRLDAALGTHDISWQWVRGHSGHVENERADELARRGTSEARQGKVDGQSSTIL.

The 142-residue stretch at 10–151 (KRVRVDMFTD…ADELARRGTS (142 aa)) folds into the RNase H type-1 domain. Residues aspartate 19, glutamate 57, aspartate 79, and aspartate 143 each coordinate Mg(2+). Over residues 145 to 157 (LARRGTSEARQGK) the composition is skewed to basic and acidic residues. A disordered region spans residues 145–166 (LARRGTSEARQGKVDGQSSTIL).

It belongs to the RNase H family. As to quaternary structure, monomer. Requires Mg(2+) as cofactor.

The protein resides in the cytoplasm. It carries out the reaction Endonucleolytic cleavage to 5'-phosphomonoester.. In terms of biological role, endonuclease that specifically degrades the RNA of RNA-DNA hybrids. The chain is Ribonuclease H from Rhodospirillum rubrum (strain ATCC 11170 / ATH 1.1.1 / DSM 467 / LMG 4362 / NCIMB 8255 / S1).